The following is a 194-amino-acid chain: Recombination protein RecR (194 aa).

A C4-type zinc finger spans residues 55-70; the sequence is CRECGNLAEGELCPIC. The Toprim domain occupies 78-171; that stretch reads SLLAVVESVA…RVTRPAYGLP (94 aa).

It belongs to the RecR family.

May play a role in DNA repair. It seems to be involved in an RecBC-independent recombinational process of DNA repair. It may act with RecF and RecO. In Thermus thermophilus (strain ATCC BAA-163 / DSM 7039 / HB27), this protein is Recombination protein RecR.